The chain runs to 283 residues: Pantothenate synthetase (283 aa).

30–37 is an ATP binding site; it reads MGALHEGH. The Proton donor role is filled by His-37. Position 61 (Gln-61) interacts with (R)-pantoate. Gln-61 contacts beta-alanine. An ATP-binding site is contributed by 149-152; that stretch reads GEKD. A (R)-pantoate-binding site is contributed by Gln-155. ATP-binding positions include Leu-178 and 186-189; that span reads RSSR.

It belongs to the pantothenate synthetase family. As to quaternary structure, homodimer.

It is found in the cytoplasm. It catalyses the reaction (R)-pantoate + beta-alanine + ATP = (R)-pantothenate + AMP + diphosphate + H(+). It functions in the pathway cofactor biosynthesis; (R)-pantothenate biosynthesis; (R)-pantothenate from (R)-pantoate and beta-alanine: step 1/1. Its function is as follows. Catalyzes the condensation of pantoate with beta-alanine in an ATP-dependent reaction via a pantoyl-adenylate intermediate. In Christiangramia forsetii (strain DSM 17595 / CGMCC 1.15422 / KT0803) (Gramella forsetii), this protein is Pantothenate synthetase.